We begin with the raw amino-acid sequence, 286 residues long: ATP synthase gamma chain (286 aa).

This sequence belongs to the ATPase gamma chain family. As to quaternary structure, F-type ATPases have 2 components, CF(1) - the catalytic core - and CF(0) - the membrane proton channel. CF(1) has five subunits: alpha(3), beta(3), gamma(1), delta(1), epsilon(1). CF(0) has three main subunits: a, b and c.

The protein resides in the cell inner membrane. Functionally, produces ATP from ADP in the presence of a proton gradient across the membrane. The gamma chain is believed to be important in regulating ATPase activity and the flow of protons through the CF(0) complex. This chain is ATP synthase gamma chain, found in Alteromonas mediterranea (strain DSM 17117 / CIP 110805 / LMG 28347 / Deep ecotype).